A 167-amino-acid polypeptide reads, in one-letter code: uncharacterized protein (167 aa).

It to A.aeolicus aq_328.

This is an uncharacterized protein from Aquifex aeolicus (strain VF5).